The following is a 572-amino-acid chain: Dihydroxy-acid dehydratase (572 aa).

Residue Cys57 participates in [2Fe-2S] cluster binding. Asp89 is a binding site for Mg(2+). [2Fe-2S] cluster is bound at residue Cys130. The Mg(2+) site is built by Asp131 and Lys132. Residue Lys132 is modified to N6-carboxylysine. Cys202 lines the [2Fe-2S] cluster pocket. Glu453 contacts Mg(2+). Catalysis depends on Ser479, which acts as the Proton acceptor.

Belongs to the IlvD/Edd family. As to quaternary structure, homodimer. The cofactor is [2Fe-2S] cluster. It depends on Mg(2+) as a cofactor.

It carries out the reaction (2R)-2,3-dihydroxy-3-methylbutanoate = 3-methyl-2-oxobutanoate + H2O. The enzyme catalyses (2R,3R)-2,3-dihydroxy-3-methylpentanoate = (S)-3-methyl-2-oxopentanoate + H2O. It functions in the pathway amino-acid biosynthesis; L-isoleucine biosynthesis; L-isoleucine from 2-oxobutanoate: step 3/4. The protein operates within amino-acid biosynthesis; L-valine biosynthesis; L-valine from pyruvate: step 3/4. Its function is as follows. Functions in the biosynthesis of branched-chain amino acids. Catalyzes the dehydration of (2R,3R)-2,3-dihydroxy-3-methylpentanoate (2,3-dihydroxy-3-methylvalerate) into 2-oxo-3-methylpentanoate (2-oxo-3-methylvalerate) and of (2R)-2,3-dihydroxy-3-methylbutanoate (2,3-dihydroxyisovalerate) into 2-oxo-3-methylbutanoate (2-oxoisovalerate), the penultimate precursor to L-isoleucine and L-valine, respectively. The sequence is that of Dihydroxy-acid dehydratase from Streptococcus sanguinis (strain SK36).